The primary structure comprises 95 residues: Aspartyl/glutamyl-tRNA(Asn/Gln) amidotransferase subunit C (95 aa).

This sequence belongs to the GatC family. Heterotrimer of A, B and C subunits.

The enzyme catalyses L-glutamyl-tRNA(Gln) + L-glutamine + ATP + H2O = L-glutaminyl-tRNA(Gln) + L-glutamate + ADP + phosphate + H(+). It catalyses the reaction L-aspartyl-tRNA(Asn) + L-glutamine + ATP + H2O = L-asparaginyl-tRNA(Asn) + L-glutamate + ADP + phosphate + 2 H(+). Allows the formation of correctly charged Asn-tRNA(Asn) or Gln-tRNA(Gln) through the transamidation of misacylated Asp-tRNA(Asn) or Glu-tRNA(Gln) in organisms which lack either or both of asparaginyl-tRNA or glutaminyl-tRNA synthetases. The reaction takes place in the presence of glutamine and ATP through an activated phospho-Asp-tRNA(Asn) or phospho-Glu-tRNA(Gln). The sequence is that of Aspartyl/glutamyl-tRNA(Asn/Gln) amidotransferase subunit C from Cytophaga hutchinsonii (strain ATCC 33406 / DSM 1761 / CIP 103989 / NBRC 15051 / NCIMB 9469 / D465).